Consider the following 492-residue polypeptide: N-succinylglutamate 5-semialdehyde dehydrogenase (492 aa).

Gly-220–Gly-225 provides a ligand contact to NAD(+). Residues Glu-243 and Cys-277 contribute to the active site.

Belongs to the aldehyde dehydrogenase family. AstD subfamily.

The enzyme catalyses N-succinyl-L-glutamate 5-semialdehyde + NAD(+) + H2O = N-succinyl-L-glutamate + NADH + 2 H(+). The protein operates within amino-acid degradation; L-arginine degradation via AST pathway; L-glutamate and succinate from L-arginine: step 4/5. Functionally, catalyzes the NAD-dependent reduction of succinylglutamate semialdehyde into succinylglutamate. In Escherichia coli O6:H1 (strain CFT073 / ATCC 700928 / UPEC), this protein is N-succinylglutamate 5-semialdehyde dehydrogenase.